A 328-amino-acid polypeptide reads, in one-letter code: uncharacterized protein (328 aa).

An N-terminal signal peptide occupies residues 1–32; that stretch reads MFNFRLFSRRGKSLGLLAIVLLLFGFYSLKSS.

Belongs to the glycosyltransferase 34 family.

It localises to the endoplasmic reticulum. This is an uncharacterized protein from Schizosaccharomyces pombe (strain 972 / ATCC 24843) (Fission yeast).